A 261-amino-acid polypeptide reads, in one-letter code: Cytochrome c oxidase subunit 3 (261 aa).

The Mitochondrial matrix portion of the chain corresponds to 1-15; sequence MTHQTHAYHMVNPSP. Residues 16-34 traverse the membrane as a helical segment; the sequence is WPLTGALSALLMTSGLIMW. The Mitochondrial intermembrane portion of the chain corresponds to 35 to 40; it reads FHFNST. The helical transmembrane segment at 41-66 threads the bilayer; the sequence is ALLMLGLTTNMLTMYQWWRDIIREST. The Mitochondrial matrix segment spans residues 67–72; sequence FQGHHT. Residues 73 to 105 form a helical membrane-spanning segment; that stretch reads PVVQKGLRYGMILFIISEVLFFTGFFWAFYHSS. Topologically, residues 106 to 128 are mitochondrial intermembrane; that stretch reads LAPTPELGGCWPPTGINPLNPLE. A helical transmembrane segment spans residues 129-152; the sequence is VPLLNTSVLLASGVSITWAHHSLM. The Mitochondrial matrix portion of the chain corresponds to 153 to 155; the sequence is EGN. A helical membrane pass occupies residues 156 to 183; the sequence is RSHMLQALFITITLGVYFTLLQASEYYE. Over 184–190 the chain is Mitochondrial intermembrane; that stretch reads APFTISD. A helical membrane pass occupies residues 191 to 223; sequence GVYGSTFFVATGFHGLHVIIGSTFLIVCFFRQL. The Mitochondrial matrix segment spans residues 224–232; it reads KFHFTSNHH. A helical membrane pass occupies residues 233 to 256; sequence FGFEAAAWYWHFVDVVWLFLYVSI. Residues 257–261 are Mitochondrial intermembrane-facing; it reads YWWGS.

The protein belongs to the cytochrome c oxidase subunit 3 family. In terms of assembly, component of the cytochrome c oxidase (complex IV, CIV), a multisubunit enzyme composed of 14 subunits. The complex is composed of a catalytic core of 3 subunits MT-CO1, MT-CO2 and MT-CO3, encoded in the mitochondrial DNA, and 11 supernumerary subunits COX4I, COX5A, COX5B, COX6A, COX6B, COX6C, COX7A, COX7B, COX7C, COX8 and NDUFA4, which are encoded in the nuclear genome. The complex exists as a monomer or a dimer and forms supercomplexes (SCs) in the inner mitochondrial membrane with NADH-ubiquinone oxidoreductase (complex I, CI) and ubiquinol-cytochrome c oxidoreductase (cytochrome b-c1 complex, complex III, CIII), resulting in different assemblies (supercomplex SCI(1)III(2)IV(1) and megacomplex MCI(2)III(2)IV(2)).

The protein resides in the mitochondrion inner membrane. The enzyme catalyses 4 Fe(II)-[cytochrome c] + O2 + 8 H(+)(in) = 4 Fe(III)-[cytochrome c] + 2 H2O + 4 H(+)(out). Functionally, component of the cytochrome c oxidase, the last enzyme in the mitochondrial electron transport chain which drives oxidative phosphorylation. The respiratory chain contains 3 multisubunit complexes succinate dehydrogenase (complex II, CII), ubiquinol-cytochrome c oxidoreductase (cytochrome b-c1 complex, complex III, CIII) and cytochrome c oxidase (complex IV, CIV), that cooperate to transfer electrons derived from NADH and succinate to molecular oxygen, creating an electrochemical gradient over the inner membrane that drives transmembrane transport and the ATP synthase. Cytochrome c oxidase is the component of the respiratory chain that catalyzes the reduction of oxygen to water. Electrons originating from reduced cytochrome c in the intermembrane space (IMS) are transferred via the dinuclear copper A center (CU(A)) of subunit 2 and heme A of subunit 1 to the active site in subunit 1, a binuclear center (BNC) formed by heme A3 and copper B (CU(B)). The BNC reduces molecular oxygen to 2 water molecules using 4 electrons from cytochrome c in the IMS and 4 protons from the mitochondrial matrix. The chain is Cytochrome c oxidase subunit 3 (MT-CO3) from Syncerus caffer (African buffalo).